We begin with the raw amino-acid sequence, 937 residues long: Translation initiation factor IF-2 (937 aa).

Residues 47 to 352 form a disordered region; the sequence is RAAFQTKATP…EMPQRKERPL (306 aa). Low complexity predominate over residues 52–68; sequence TKATPAASKPATPAAPK. The span at 97 to 116 shows a compositional bias: polar residues; the sequence is QHSNNRPQANANRNGQASNG. Residues 117–153 show a composition bias toward low complexity; sequence QNRTNNARPNNNSARPNNSRPNTNSRPNNNSQNRSTS. The segment covering 154-169 has biased composition (polar residues); it reads ANHPMSLQEQISQANA. Over residues 173–197 the composition is skewed to basic and acidic residues; sequence RTQERIQQQREQREADEKKRREQAN. The segment covering 202–229 has biased composition (polar residues); the sequence is TRNNASNNRPSNGKPTNGARPTTNSPRP. Low complexity predominate over residues 240 to 269; sequence SSRPNNNNSARPNTTNNRPTNSRPATTPSR. The segment covering 274–298 has biased composition (polar residues); the sequence is QEMQQKMQANTVSASKPASNNTASK. Positions 322–331 are enriched in basic residues; the sequence is FNKKRKKTRK. Positions 339 to 352 are enriched in basic and acidic residues; sequence AAKKEMPQRKERPL. One can recognise a tr-type G domain in the interval 438–607; sequence SRPPVVTIMG…LLEADVLELK (170 aa). The tract at residues 447 to 454 is G1; that stretch reads GHVDHGKT. 447–454 contributes to the GTP binding site; that stretch reads GHVDHGKT. Positions 472 to 476 are G2; that stretch reads GITQH. The G3 stretch occupies residues 493-496; that stretch reads DTPG. GTP is bound by residues 493–497 and 547–550; these read DTPGH and NKID. The interval 547–550 is G4; sequence NKID. Residues 583–585 are G5; sequence SAK.

Belongs to the TRAFAC class translation factor GTPase superfamily. Classic translation factor GTPase family. IF-2 subfamily.

Its subcellular location is the cytoplasm. Its function is as follows. One of the essential components for the initiation of protein synthesis. Protects formylmethionyl-tRNA from spontaneous hydrolysis and promotes its binding to the 30S ribosomal subunits. Also involved in the hydrolysis of GTP during the formation of the 70S ribosomal complex. This Latilactobacillus sakei subsp. sakei (strain 23K) (Lactobacillus sakei subsp. sakei) protein is Translation initiation factor IF-2.